A 158-amino-acid chain; its full sequence is 2-C-methyl-D-erythritol 2,4-cyclodiphosphate synthase (158 aa).

2 residues coordinate a divalent metal cation: D9 and H11. 4-CDP-2-C-methyl-D-erythritol 2-phosphate-binding positions include 9 to 11 and 35 to 36; these read DVH and HS. H43 lines the a divalent metal cation pocket. 4-CDP-2-C-methyl-D-erythritol 2-phosphate is bound by residues 57-59, 62-66, 101-107, 133-136, F140, and R143; these read DIG, FPDTD, AQAPKMA, and TTTE.

It belongs to the IspF family. In terms of assembly, homotrimer. The cofactor is a divalent metal cation.

It catalyses the reaction 4-CDP-2-C-methyl-D-erythritol 2-phosphate = 2-C-methyl-D-erythritol 2,4-cyclic diphosphate + CMP. It participates in isoprenoid biosynthesis; isopentenyl diphosphate biosynthesis via DXP pathway; isopentenyl diphosphate from 1-deoxy-D-xylulose 5-phosphate: step 4/6. Its function is as follows. Involved in the biosynthesis of isopentenyl diphosphate (IPP) and dimethylallyl diphosphate (DMAPP), two major building blocks of isoprenoid compounds. Catalyzes the conversion of 4-diphosphocytidyl-2-C-methyl-D-erythritol 2-phosphate (CDP-ME2P) to 2-C-methyl-D-erythritol 2,4-cyclodiphosphate (ME-CPP) with a corresponding release of cytidine 5-monophosphate (CMP). This is 2-C-methyl-D-erythritol 2,4-cyclodiphosphate synthase from Vibrio vulnificus (strain YJ016).